The chain runs to 84 residues: UPF0297 protein NT01CX_2279 (84 aa).

This sequence belongs to the UPF0297 family.

The protein is UPF0297 protein NT01CX_2279 of Clostridium novyi (strain NT).